The primary structure comprises 139 residues: Translation initiation factor 2 subunit beta (139 aa).

The protein belongs to the eIF-2-beta/eIF-5 family. Heterotrimer composed of an alpha, a beta and a gamma chain.

Functionally, eIF-2 functions in the early steps of protein synthesis by forming a ternary complex with GTP and initiator tRNA. In Methanococcus aeolicus (strain ATCC BAA-1280 / DSM 17508 / OCM 812 / Nankai-3), this protein is Translation initiation factor 2 subunit beta.